The following is a 196-amino-acid chain: Probable malonic semialdehyde reductase RutE (196 aa).

Belongs to the nitroreductase family. HadB/RutE subfamily. Requires FMN as cofactor.

The enzyme catalyses 3-hydroxypropanoate + NADP(+) = 3-oxopropanoate + NADPH + H(+). May reduce toxic product malonic semialdehyde to 3-hydroxypropionic acid, which is excreted. The protein is Probable malonic semialdehyde reductase RutE of Escherichia coli O6:H1 (strain CFT073 / ATCC 700928 / UPEC).